The following is a 953-amino-acid chain: Probable isoleucine--tRNA ligase, cytoplasmic (953 aa).

The 'HIGH' region signature appears at 45–55 (PFATGLPHYGH). The short motif at 634-638 (KMSKR) is the 'KMSKS' region element. Position 637 (K637) interacts with ATP.

The protein belongs to the class-I aminoacyl-tRNA synthetase family.

The protein resides in the cytoplasm. It carries out the reaction tRNA(Ile) + L-isoleucine + ATP = L-isoleucyl-tRNA(Ile) + AMP + diphosphate. This Enterocytozoon bieneusi (strain H348) (Microsporidian parasite) protein is Probable isoleucine--tRNA ligase, cytoplasmic.